Consider the following 326-residue polypeptide: Nicotianamine synthase 2 (326 aa).

This sequence belongs to the nicotianamine synthase (NAS)-like family. Expressed in roots.

It catalyses the reaction 3 S-adenosyl-L-methionine = nicotianamine + 3 S-methyl-5'-thioadenosine + 3 H(+). Synthesizes nicotianamine, a polyamine that is the first intermediate in the synthesis of the phytosiderophores of the mugineic acid type found in gramineae which serve as a sensor for the physiological iron status within the plant, and/or might be involved in the transport of iron. This is Nicotianamine synthase 2 (NAS2) from Oryza sativa subsp. japonica (Rice).